A 206-amino-acid chain; its full sequence is Small ribosomal subunit protein uS4 (206 aa).

The region spanning 96 to 156 (NRLDNVTYRI…KNSKLQSRIK (61 aa)) is the S4 RNA-binding domain.

The protein belongs to the universal ribosomal protein uS4 family. As to quaternary structure, part of the 30S ribosomal subunit. Contacts protein S5. The interaction surface between S4 and S5 is involved in control of translational fidelity.

Its function is as follows. One of the primary rRNA binding proteins, it binds directly to 16S rRNA where it nucleates assembly of the body of the 30S subunit. Functionally, with S5 and S12 plays an important role in translational accuracy. The sequence is that of Small ribosomal subunit protein uS4 from Buchnera aphidicola subsp. Baizongia pistaciae (strain Bp).